The sequence spans 362 residues: Chorismate synthase (362 aa).

R47 lines the NADP(+) pocket. FMN-binding positions include 124–126, G286, 301–305, and R327; these read RSS and KPTAT.

The protein belongs to the chorismate synthase family. Homotetramer. FMNH2 is required as a cofactor.

The enzyme catalyses 5-O-(1-carboxyvinyl)-3-phosphoshikimate = chorismate + phosphate. The protein operates within metabolic intermediate biosynthesis; chorismate biosynthesis; chorismate from D-erythrose 4-phosphate and phosphoenolpyruvate: step 7/7. Functionally, catalyzes the anti-1,4-elimination of the C-3 phosphate and the C-6 proR hydrogen from 5-enolpyruvylshikimate-3-phosphate (EPSP) to yield chorismate, which is the branch point compound that serves as the starting substrate for the three terminal pathways of aromatic amino acid biosynthesis. This reaction introduces a second double bond into the aromatic ring system. This is Chorismate synthase from Synechococcus elongatus (strain ATCC 33912 / PCC 7942 / FACHB-805) (Anacystis nidulans R2).